The chain runs to 245 residues: Phosphoribosylaminoimidazole-succinocarboxamide synthase (245 aa).

The protein belongs to the SAICAR synthetase family.

It carries out the reaction 5-amino-1-(5-phospho-D-ribosyl)imidazole-4-carboxylate + L-aspartate + ATP = (2S)-2-[5-amino-1-(5-phospho-beta-D-ribosyl)imidazole-4-carboxamido]succinate + ADP + phosphate + 2 H(+). It participates in purine metabolism; IMP biosynthesis via de novo pathway; 5-amino-1-(5-phospho-D-ribosyl)imidazole-4-carboxamide from 5-amino-1-(5-phospho-D-ribosyl)imidazole-4-carboxylate: step 1/2. The protein is Phosphoribosylaminoimidazole-succinocarboxamide synthase of Acaryochloris marina (strain MBIC 11017).